The chain runs to 400 residues: Imidazolonepropionase (400 aa).

2 residues coordinate Fe(3+): His68 and His70. 2 residues coordinate Zn(2+): His68 and His70. 4-imidazolone-5-propanoate-binding residues include Arg77, Tyr140, and His173. Tyr140 serves as a coordination point for N-formimidoyl-L-glutamate. Residue His238 coordinates Fe(3+). Residue His238 coordinates Zn(2+). 4-imidazolone-5-propanoate is bound at residue Gln241. Asp313 is a Fe(3+) binding site. Asp313 is a Zn(2+) binding site. N-formimidoyl-L-glutamate-binding residues include Asn315 and Gly317. Thr318 is a binding site for 4-imidazolone-5-propanoate.

Belongs to the metallo-dependent hydrolases superfamily. HutI family. Requires Zn(2+) as cofactor. It depends on Fe(3+) as a cofactor.

It localises to the cytoplasm. The enzyme catalyses 4-imidazolone-5-propanoate + H2O = N-formimidoyl-L-glutamate. The protein operates within amino-acid degradation; L-histidine degradation into L-glutamate; N-formimidoyl-L-glutamate from L-histidine: step 3/3. Its function is as follows. Catalyzes the hydrolytic cleavage of the carbon-nitrogen bond in imidazolone-5-propanoate to yield N-formimidoyl-L-glutamate. It is the third step in the universal histidine degradation pathway. The sequence is that of Imidazolonepropionase from Paracoccus denitrificans (strain Pd 1222).